A 648-amino-acid polypeptide reads, in one-letter code: Transcription termination factor FttA (648 aa).

Residues 9–76 (DDILKEIREI…ISVRPDPDIL (68 aa)) form a KHa region. A KHb region spans residues 77 to 144 (LPPEKAEELI…WAPRVVRTPP (68 aa)). Residues 185-395 (WIRITGLGGF…LVMESTYGGS (211 aa)) are metallo-beta-lactamase N-terminus. Positions 253, 255, 257, 258, 341, and 364 each coordinate Zn(2+). Residues 396 to 589 (NDYQMPREEA…MEVHTIDGFS (194 aa)) are beta-Casp. Positions 590–648 (GHADRRELMSYVARVRPRPERIITVHGEAHKCLDLSSSIHKKFGISTRAPNNLDAIRLK) are metallo-beta-lactamase C-terminus. Histidine 615 is a Zn(2+) binding site.

Belongs to the metallo-beta-lactamase superfamily. RNA-metabolizing metallo-beta-lactamase-like family. FttA subfamily. As to quaternary structure, homodimer. Probably interacts transiently with RNA polymerase (RNAP), (via at least the RNAP stalk subunits Rpo4 and Rpo7), interacts transiently with the Spt4-Spt5 complex. It depends on Zn(2+) as a cofactor.

Transcription termination is stimulated by the Spt4-Spt5 complex. Dipicolinic acid inhibits FttA-mediated termination in vitro and inhibits growth in vivo. In terms of biological role, terminates transcription on the whole genome. Termination is linked to FttA-mediated RNA cleavage and does not require NTP hydrolysis. Cleaves endonucleolytically at the RNA exit channel of RNA polymerase (RNAP); the 5'-3' exonuclease activity of this protein degrades the nascent RNA released from RNAP. Facilitates transcription termination; addition of this factor to stalled transcription elongation complexes (TEC) promotes nascent transcript cleavage and releases RNA polymerase (RNAP) from DNA in vitro. Transcription termination competes with productive transcription elongation. Termination is stimulated by C-rich transcripts and inhibited by G-rich transcripts; the Spt4-Spt5 complex enhances termination on C-less transcripts. Yields an approximately 100 nucleotide RNA, consistent with endonucleolytic cleavage at the RNA exit channel of RNAP. The chain is Transcription termination factor FttA from Thermococcus kodakarensis (strain ATCC BAA-918 / JCM 12380 / KOD1) (Pyrococcus kodakaraensis (strain KOD1)).